Consider the following 174-residue polypeptide: Bacterial proteasome activator (174 aa).

Positions Q153 to L174 are disordered. Over residues G161–L174 the composition is skewed to gly residues. The short motif at Q172–L174 is the HbYX motif element.

The protein belongs to the Bpa family. Forms a homooligomeric, either hexameric or heptameric, ring-like structure which stacks co-axially with the proteasomal alpha-rings.

In terms of biological role, interacts with the core proteasome alpha-subunit (PrcA) through its C-terminal hydrophobic-tyrosine-X motif (HbYX motif). Interaction of Bpa with the proteasome stimulates proteasomal peptidase and casein degradation activity, which suggests Bpa could play a role in the removal of non-native or damaged proteins by influencing the conformation of the proteasome complex upon interaction. This is Bacterial proteasome activator (bpa) from Mycobacterium bovis (strain ATCC BAA-935 / AF2122/97).